The following is a 213-amino-acid chain: MGQKVHPFGFRLGYNKNWQSRWFSKKEYPAFVYEDSKIRAFVKKLLYHAGLSKIEIERAGGKVRLILSTARPGIVIGRKGVEIEKLRNDLRQKFGREFSLEVNEIRRPEVDAQLVAENIAQQLERRVAFRRAMKRTVSMARKFGGEGIKVTCSGRLAGAEIARTEWYRDGRVPLQTLRADIDYGFAEARTTYGIIGVKVWIYKGEILDKEVDQ.

The KH type-2 domain maps to 38-106; that stretch reads IRAFVKKLLY…EFSLEVNEIR (69 aa).

The protein belongs to the universal ribosomal protein uS3 family. In terms of assembly, part of the 30S ribosomal subunit. Forms a tight complex with proteins S10 and S14.

In terms of biological role, binds the lower part of the 30S subunit head. Binds mRNA in the 70S ribosome, positioning it for translation. The sequence is that of Small ribosomal subunit protein uS3 from Desulfovibrio desulfuricans (strain ATCC 27774 / DSM 6949 / MB).